We begin with the raw amino-acid sequence, 340 residues long: Solute-binding protein Dde_0634 (340 aa).

The N-terminal stretch at 1–29 (MKSTFAALLIMVGCLVSGALLTGSEAAAA) is a signal peptide. Residues tyrosine 99, arginine 172, 210-213 (TSLD), and tyrosine 235 contribute to the (indol-3-yl)acetate site.

The protein belongs to the bacterial solute-binding protein 7 family. The complex is comprised of an extracytoplasmic solute-binding protein and a heteromeric permease formed by two transmembrane proteins.

Its subcellular location is the periplasm. In terms of biological role, solute-binding protein that binds indole-3-pyruvate and indole-3-acetate (in vitro). Can also bind D-tryptophan (in vitro), but that is probably not a physiological ligand. Probably part of a tripartite ATP-independent periplasmic (TRAP) transport system that mediates solute transport into the cytoplasm. In Oleidesulfovibrio alaskensis (strain ATCC BAA-1058 / DSM 17464 / G20) (Desulfovibrio alaskensis), this protein is Solute-binding protein Dde_0634.